We begin with the raw amino-acid sequence, 296 residues long: Stanniocalcin-2 (296 aa).

Residues 1-24 (MCAERLGQFVTLALVFATLDPAQG) form the signal peptide. The tract at residues 21–44 (PAQGTDSTNPPEGPQDRSSQQKGR) is disordered. The span at 24–44 (GTDSTNPPEGPQDRSSQQKGR) shows a compositional bias: polar residues. An N-linked (GlcNAc...) asparagine glycan is attached at Asn73. The interval 218–296 (PPTAAPEHQP…EQSEYSDIRR (79 aa)) is disordered. The span at 240–258 (RDTDHHLTANRGAKGERGS) shows a compositional bias: basic and acidic residues. Over residues 272–282 (GQSAQGPSGSS) the composition is skewed to low complexity.

Belongs to the stanniocalcin family. As to quaternary structure, homodimer; disulfide-linked. As to expression, found in a variety of tissues including skeletal muscle, small intestine, kidney, liver and brain.

It localises to the secreted. Has an anti-hypocalcemic action on calcium and phosphate homeostasis. This Mus musculus (Mouse) protein is Stanniocalcin-2 (Stc2).